Consider the following 1036-residue polypeptide: Mitogen-activated protein kinase kinase kinase 21 (1036 aa).

Positions 1–36 (MALRGAAGATDTPVSSAGGAPGGSASSSSTSSGGSA) are disordered. Over residues 15–36 (SSAGGAPGGSASSSSTSSGGSA) the composition is skewed to low complexity. Residues 38–102 (AGAGLWAALY…PANYVAPCRP (65 aa)) form the SH3 domain. Residues 124–401 (LELKELIGAG…ALILEQLTAI (278 aa)) enclose the Protein kinase domain. ATP-binding positions include 130 to 138 (IGAGGFGQV) and lysine 151. Catalysis depends on aspartate 263, which acts as the Proton acceptor. Phosphothreonine; by autocatalysis is present on threonine 299. Serine 303 carries the post-translational modification Phosphoserine; by autocatalysis and MAP4K1. Leucine-zipper regions lie at residues 425–446 (IQQM…EEEL) and 460–481 (LKRR…ELNI). The tract at residues 517 to 551 (SDFQHKITVQASPNLDKRRSLNSSSSSPPSSPTMM) is disordered. Phosphoserine occurs at positions 528, 543, and 547. Residue threonine 592 is modified to Phosphothreonine. Serine 614 is modified (phosphoserine). The segment covering 748-763 (AEEPLPKEEKKKREGI) has biased composition (basic and acidic residues). Disordered stretches follow at residues 748-791 (AEEP…SSPP) and 923-954 (PHSH…RSRS).

Belongs to the protein kinase superfamily. STE Ser/Thr protein kinase family. MAP kinase kinase kinase subfamily. In terms of assembly, homodimer. Interacts with TLR4. It depends on Mg(2+) as a cofactor. Post-translationally, autophosphorylation on serine and threonine residues within the activation loop plays a role in enzyme activation.

The catalysed reaction is L-seryl-[protein] + ATP = O-phospho-L-seryl-[protein] + ADP + H(+). The enzyme catalyses L-threonyl-[protein] + ATP = O-phospho-L-threonyl-[protein] + ADP + H(+). With respect to regulation, homodimerization via the leucine zipper domains is required for autophosphorylation and subsequent activation. Its function is as follows. Negative regulator of TLR4 signaling. Does not activate JNK1/MAPK8 pathway, p38/MAPK14, nor ERK2/MAPK1 pathways. The sequence is that of Mitogen-activated protein kinase kinase kinase 21 from Homo sapiens (Human).